Here is a 240-residue protein sequence, read N- to C-terminus: UDP-2,3-diacylglucosamine hydrolase (240 aa).

D7, H9, D40, N78, and H113 together coordinate Mn(2+). 78 to 79 (NR) contributes to the substrate binding site. D121, S159, K166, and H194 together coordinate substrate. Positions 194 and 196 each coordinate Mn(2+).

The protein belongs to the LpxH family. Mn(2+) serves as cofactor.

The protein resides in the cell inner membrane. It carries out the reaction UDP-2-N,3-O-bis[(3R)-3-hydroxytetradecanoyl]-alpha-D-glucosamine + H2O = 2-N,3-O-bis[(3R)-3-hydroxytetradecanoyl]-alpha-D-glucosaminyl 1-phosphate + UMP + 2 H(+). It functions in the pathway glycolipid biosynthesis; lipid IV(A) biosynthesis; lipid IV(A) from (3R)-3-hydroxytetradecanoyl-[acyl-carrier-protein] and UDP-N-acetyl-alpha-D-glucosamine: step 4/6. In terms of biological role, hydrolyzes the pyrophosphate bond of UDP-2,3-diacylglucosamine to yield 2,3-diacylglucosamine 1-phosphate (lipid X) and UMP by catalyzing the attack of water at the alpha-P atom. Involved in the biosynthesis of lipid A, a phosphorylated glycolipid that anchors the lipopolysaccharide to the outer membrane of the cell. The polypeptide is UDP-2,3-diacylglucosamine hydrolase (Pseudomonas putida (strain ATCC 700007 / DSM 6899 / JCM 31910 / BCRC 17059 / LMG 24140 / F1)).